Reading from the N-terminus, the 719-residue chain is T-cell immunomodulatory protein homolog (719 aa).

Positions 1-32 are cleaved as a signal peptide; the sequence is MYNFLSCKKKSIILQVLLIICTYNILLNFVNI. The Extracellular portion of the chain corresponds to 33–677; that stretch reads FVNNNEKNHK…LSVNPSKKFY (645 aa). 5 N-linked (GlcNAc...) asparagine glycosylation sites follow: N144, N277, N410, N540, and N659. Residues 678–697 traverse the membrane as a helical segment; that stretch reads SILYITLICLSVIGVLIFIL. At 698-719 the chain is on the cytoplasmic side; sequence DRKEKVEDSKEELGFKSHFVIG.

It belongs to the TIP family.

Its subcellular location is the membrane. May protect the parasite against attack by the host immune system by immunomodulation. This chain is T-cell immunomodulatory protein homolog, found in Plasmodium falciparum (isolate 3D7).